The following is a 361-amino-acid chain: UDP-3-O-acylglucosamine N-acyltransferase (361 aa).

Catalysis depends on His-253, which acts as the Proton acceptor.

This sequence belongs to the transferase hexapeptide repeat family. LpxD subfamily. In terms of assembly, homotrimer.

It carries out the reaction a UDP-3-O-[(3R)-3-hydroxyacyl]-alpha-D-glucosamine + a (3R)-hydroxyacyl-[ACP] = a UDP-2-N,3-O-bis[(3R)-3-hydroxyacyl]-alpha-D-glucosamine + holo-[ACP] + H(+). It participates in bacterial outer membrane biogenesis; LPS lipid A biosynthesis. Functionally, catalyzes the N-acylation of UDP-3-O-acylglucosamine using 3-hydroxyacyl-ACP as the acyl donor. Is involved in the biosynthesis of lipid A, a phosphorylated glycolipid that anchors the lipopolysaccharide to the outer membrane of the cell. This Burkholderia mallei (strain ATCC 23344) protein is UDP-3-O-acylglucosamine N-acyltransferase.